Here is a 355-residue protein sequence, read N- to C-terminus: Inner membrane protein YghQ (355 aa).

Residues 1–37 (MAGFNIKHWFADGAFRTIIRNSAWLGSSNVVSALLGL) are Periplasmic-facing. A helical membrane pass occupies residues 38-58 (LALSCAGKGMTPAMFGVLVIV). The Cytoplasmic segment spans residues 59–100 (QSYAKSISDFIKFQTWQLVVQYGTPALTNNNPQQFRNVVSFS). A helical membrane pass occupies residues 101-121 (FSLDIVSGAVAIVGGIALLPF). The Periplasmic segment spans residues 122-134 (LSHSLGLDDQSFW). A helical membrane pass occupies residues 135 to 155 (LAALYCTLIPSMASSTPTGIL). Topologically, residues 156–177 (RAVDRFDLIAVQQATKPFLRAA) are cytoplasmic. A helical transmembrane segment spans residues 178–198 (GSVVAWYFDFGFAGFVIAWYV). The Periplasmic portion of the chain corresponds to 199–261 (SNLVGGTMYW…WSARNSCSTV (63 aa)). A helical membrane pass occupies residues 262 to 282 (LVGIVLGPAAAGLFKIAMTFF). Over 283–323 (DAAGTPAGLLGKSFYPEVMRLDPRTTRPWLLGVKSGLLAGG) the chain is Cytoplasmic. A helical transmembrane segment spans residues 324–344 (IGILVALAVLIVGKPLISLVF). The Periplasmic portion of the chain corresponds to 345-355 (GVKYLEAYDLI).

It is found in the cell inner membrane. This chain is Inner membrane protein YghQ (yghQ), found in Escherichia coli (strain K12).